A 372-amino-acid chain; its full sequence is NAD(P)H-quinone oxidoreductase subunit 1 (372 aa).

8 helical membrane passes run alanine 27 to valine 47, tryptophan 97 to valine 117, valine 130 to glycine 150, leucine 176 to valine 196, isoleucine 204 to leucine 224, phenylalanine 254 to valine 274, serine 308 to leucine 328, and valine 351 to glycine 371.

Belongs to the complex I subunit 1 family. In terms of assembly, NDH-1 is composed of at least 11 different subunits.

It is found in the cellular thylakoid membrane. The catalysed reaction is a plastoquinone + NADH + (n+1) H(+)(in) = a plastoquinol + NAD(+) + n H(+)(out). It catalyses the reaction a plastoquinone + NADPH + (n+1) H(+)(in) = a plastoquinol + NADP(+) + n H(+)(out). Functionally, NDH-1 shuttles electrons from an unknown electron donor, via FMN and iron-sulfur (Fe-S) centers, to quinones in the respiratory and/or the photosynthetic chain. The immediate electron acceptor for the enzyme in this species is believed to be plastoquinone. Couples the redox reaction to proton translocation, and thus conserves the redox energy in a proton gradient. The sequence is that of NAD(P)H-quinone oxidoreductase subunit 1 from Microcystis aeruginosa (strain NIES-843 / IAM M-2473).